The primary structure comprises 362 residues: Melatonin receptor type 1B (362 aa).

Over 1 to 42 (MSENGSFANCCEAGGWAVRPGWSGAGSARPSRTPRPPWVAPA) the chain is Extracellular. N-linked (GlcNAc...) asparagine glycosylation is present at Asn4. Residues 43–63 (LSAVLIVTTAVDVVGNLLVIL) traverse the membrane as a helical segment. At 64 to 76 (SVLRNRKLRNAGN) the chain is on the cytoplasmic side. Residues 77–97 (LFLVSLALADLVVAFYPYPLI) traverse the membrane as a helical segment. Residues 98–115 (LVAIFYDGWALGEEHCKA) are Extracellular-facing. A disulfide bond links Cys113 and Cys190. The chain crosses the membrane as a helical span at residues 116-136 (SAFVMGLSVIGSVFNITAIAI). Topologically, residues 137-155 (NRYCYICHSMAYHRIYRRW) are cytoplasmic. A helical membrane pass occupies residues 156-176 (HTPLHICLIWLLTVVALLPNF). Melatonin is bound by residues Asn175 and Gln194. Over 177–200 (FVGSLEYDPRIYSCTFIQTASTQY) the chain is Extracellular. Residues 201–221 (TAAVVVIHFLLPIAVVSFCYL) traverse the membrane as a helical segment. At 222–253 (RIWVLVLQARRKAKPESRLCLKPSDLRSFLTM) the chain is on the cytoplasmic side. A helical membrane pass occupies residues 254 to 274 (FVVFVIFAICWAPLNCIGLAV). Residues 275 to 287 (AINPQEMAPQIPE) lie on the Extracellular side of the membrane. A helical membrane pass occupies residues 288-308 (GLFVTSYLLAYFNSCLNAIVY). Residues 309-362 (GLLNQNFRREYKRILLALWNPRHCIQDASKGSHAEGLQSPAPPIIGVQHQADAL) lie on the Cytoplasmic side of the membrane.

The protein belongs to the G-protein coupled receptor 1 family. Interacts with GPR61, GPR62 and GPR135. As to expression, expressed in retina and less in brain and hippocampus.

The protein resides in the cell membrane. Its function is as follows. High affinity receptor for melatonin. Likely to mediate the reproductive and circadian actions of melatonin. The activity of this receptor is mediated by pertussis toxin sensitive G proteins that inhibit adenylate cyclase activity. The chain is Melatonin receptor type 1B (MTNR1B) from Homo sapiens (Human).